Reading from the N-terminus, the 206-residue chain is Outer-membrane lipoprotein LolB (206 aa).

An N-terminal signal peptide occupies residues Met-1 to Ala-18. A lipid anchor (N-palmitoyl cysteine) is attached at Cys-19. A lipid anchor (S-diacylglycerol cysteine) is attached at Cys-19.

Belongs to the LolB family. In terms of assembly, monomer.

The protein localises to the cell outer membrane. Functionally, plays a critical role in the incorporation of lipoproteins in the outer membrane after they are released by the LolA protein. This Haemophilus influenzae (strain PittGG) protein is Outer-membrane lipoprotein LolB.